The following is an 846-amino-acid chain: Integrin beta-PS (846 aa).

Residues 1-28 form the signal peptide; it reads MILERNRRCQLALLMIAILAAIAGQTDA. Topologically, residues 29–777 are extracellular; it reads QKAAKLTAVS…NKECPAKVFM (749 aa). The cysteines at positions 46 and 55 are disulfide-linked. Residue asparagine 72 is glycosylated (N-linked (GlcNAc...) asparagine). One can recognise a VWFA domain in the interval 186–419; sequence DLYYLMDLSK…ELVKEEYRKI (234 aa). A disulfide bridge connects residues cysteine 249 and cysteine 252. N-linked (GlcNAc...) asparagine glycans are attached at residues asparagine 266 and asparagine 277. Residues cysteine 300 and cysteine 341 are joined by a disulfide bond. Asparagine 403 and asparagine 428 each carry an N-linked (GlcNAc...) asparagine glycan. Disulfide bonds link cysteine 441-cysteine 453, cysteine 473-cysteine 741, cysteine 507-cysteine 530, cysteine 522-cysteine 533, cysteine 535-cysteine 544, cysteine 546-cysteine 579, cysteine 561-cysteine 577, cysteine 571-cysteine 582, cysteine 584-cysteine 599, cysteine 601-cysteine 624, cysteine 606-cysteine 622, cysteine 614-cysteine 627, cysteine 629-cysteine 638, cysteine 640-cysteine 664, cysteine 647-cysteine 662, cysteine 656-cysteine 667, cysteine 669-cysteine 682, cysteine 685-cysteine 688, cysteine 692-cysteine 701, cysteine 698-cysteine 771, and cysteine 719-cysteine 749. 4 I-EGF domains span residues 507 to 545, 546 to 600, 601 to 639, and 640 to 683; these read CENP…NKCE, CSAT…KHCE, CDNF…SNCG, and CQES…RHCE. The N-linked (GlcNAc...) asparagine glycan is linked to asparagine 557. Residue asparagine 603 is glycosylated (N-linked (GlcNAc...) asparagine). Asparagine 644 carries N-linked (GlcNAc...) asparagine glycosylation. Asparagine 718 carries N-linked (GlcNAc...) asparagine glycosylation. The helical transmembrane segment at 778 to 798 threads the bilayer; the sequence is LGIVMGVIAAIVLVGLAILLL. The Cytoplasmic portion of the chain corresponds to 799 to 846; that stretch reads WKLLTTIHDRREFARFEKERMNAKWDTGENPIYKQATSTFKNPMYAGK. Phosphotyrosine is present on residues tyrosine 831 and tyrosine 843.

It belongs to the integrin beta chain family. In terms of assembly, heterodimer of an alpha and a beta subunit. Beta-PS associates with either alpha-PS1, alpha-PS2, alpha-PS3, alpha-PS4 or alpha-PS5. In ovaries, strongly expressed in follicle cells. In oocytes, expressed in the forming dorsal appendages (at protein level). Expressed in the embryonic dorsal cuticle, the larval eye and the wing imaginal disk. In testes, detected at the interface between somatic hub cells and cyst stem cells.

The protein localises to the cell membrane. Its subcellular location is the apical cell membrane. It localises to the lateral cell membrane. The protein resides in the basal cell membrane. Functionally, integrin alpha-PS1/beta-PS is a receptor for laminin. Integrin alpha-PS2/beta-PS is a receptor for Tig, wb and Ten-m. Contributes to endodermal integrity and adhesion between the midgut epithelium and the surrounding visceral muscle. Essential for migration of the primordial midgut cells and for maintaining, but not establishing, cell polarity in the midgut epithelium. The two beta subunits mediate midgut migration by distinct mechanisms: beta-PS requires rhea/talin and Itgbn does not. Required for rhea/talin correct cellular localization in the midgut. Required for many embryonic (dorsal closure and somatic muscle attachments) and postembryonic developmental processes (attachment between cell layers of imaginal disks, organization of ommatidial arrays and flight muscle development). Involved in the function and/or development of the olfactory system. In the testes, essential for shv-dependent maintenance of somatic hub cells and their localization to the apical tip. Plays a role in timely border cell migration during oogenesis. The protein is Integrin beta-PS (mys) of Drosophila melanogaster (Fruit fly).